A 465-amino-acid polypeptide reads, in one-letter code: Fujikurins efflux protein FFUJ_12242 (465 aa).

The disordered stretch occupies residues 1–66; sequence MATNVGGAVD…AAKAHDEGPP (66 aa). Positions 11 to 28 are enriched in basic and acidic residues; it reads NSRRSISDNRHDPEKPAE. The next 7 membrane-spanning stretches (helical) occupy residues 70–90, 115–135, 142–162, 175–195, 200–220, 231–251, and 274–294; these read TAAW…PGWI, WIPS…GIIF, PLII…SLAK, SAIG…TWFL, AAMG…PIMI, WALR…CLTV, and PAFA…YIPI. Asparagine 310 carries N-linked (GlcNAc...) asparagine glycosylation. 5 helical membrane passes run 314 to 334, 342 to 362, 368 to 388, 404 to 424, and 430 to 450; these read YLVA…GYGA, MFII…IPAT, IGYA…VGAL, IVFL…GAIL, and GWVS…AIIL.

The protein belongs to the major facilitator superfamily. Monocarboxylate porter (TC 2.A.1.13) family.

The protein resides in the cell membrane. Its function is as follows. Efflux pump that may be involved in the secretion of fujikurins. In Gibberella fujikuroi (strain CBS 195.34 / IMI 58289 / NRRL A-6831) (Bakanae and foot rot disease fungus), this protein is Fujikurins efflux protein FFUJ_12242.